A 123-amino-acid polypeptide reads, in one-letter code: Small ribosomal subunit protein uS13 (123 aa).

This sequence belongs to the universal ribosomal protein uS13 family. In terms of assembly, part of the 30S ribosomal subunit. Forms a loose heterodimer with protein S19. Forms two bridges to the 50S subunit in the 70S ribosome.

Located at the top of the head of the 30S subunit, it contacts several helices of the 16S rRNA. In the 70S ribosome it contacts the 23S rRNA (bridge B1a) and protein L5 of the 50S subunit (bridge B1b), connecting the 2 subunits; these bridges are implicated in subunit movement. Contacts the tRNAs in the A and P-sites. This chain is Small ribosomal subunit protein uS13, found in Anaplasma marginale (strain St. Maries).